The chain runs to 219 residues: Beta-crystallin B2 (219 aa).

Ala-2 is modified (N-acetylalanine). The N-terminal arm stretch occupies residues 2–16; it reads ASEHQMPASKQQPAS. Beta/gamma crystallin 'Greek key' domains lie at 17 to 56 and 57 to 101; these read PNIAIFEQENFQGRCHELSGACPNLKDAGVDKVGSILVHS and GPWV…RPIK. A connecting peptide region spans residues 102 to 120; sequence VVRAPRQPLPTRQTKDSQE. Beta/gamma crystallin 'Greek key' domains follow at residues 121 to 162 and 163 to 205; these read HKIV…RVQS and GTWV…RRIR. The tract at residues 207–219 is C-terminal arm; it reads MQWHQRGAYHPSN.

Belongs to the beta/gamma-crystallin family. In terms of assembly, homo/heterodimer, or complexes of higher-order. The structure of beta-crystallin oligomers seems to be stabilized through interactions between the N-terminal arms.

Crystallins are the dominant structural components of the vertebrate eye lens. This chain is Beta-crystallin B2 (CRYBB2), found in Gallus gallus (Chicken).